A 345-amino-acid polypeptide reads, in one-letter code: Molybdate/tungstate-binding protein WtpA (345 aa).

Residues 1–27 (MREGGVMKKRLLALIVAFAVLTAGCLG) form the signal peptide. Molybdate is bound by residues 41 to 42 (GS), Ser-75, 160 to 162 (DPC), Glu-218, and Tyr-236. Residues 41–42 (GS), Ser-75, 160–162 (DPC), Glu-218, and Tyr-236 each bind tungstate.

This sequence belongs to the bacterial solute-binding protein 1 family. WtpA subfamily. As to quaternary structure, monomer. The complex is composed of two ATP-binding proteins (WtpC), two transmembrane proteins (WtpB) and a solute-binding protein (WtpA).

Its subcellular location is the cell membrane. Functionally, part of the ABC transporter complex WtpABC involved in molybdate/tungstate import. Binds tungstate and molybdate, with a preference for tungstate. The polypeptide is Molybdate/tungstate-binding protein WtpA (Pyrococcus furiosus (strain ATCC 43587 / DSM 3638 / JCM 8422 / Vc1)).